The chain runs to 148 residues: Protein NrdI (148 aa).

The protein belongs to the NrdI family.

Probably involved in ribonucleotide reductase function. The protein is Protein NrdI of Corynebacterium glutamicum (strain R).